A 512-amino-acid polypeptide reads, in one-letter code: Rab11 family-interacting protein 2 (512 aa).

A C2 domain is found at Met-1–Phe-120. The segment at Val-15–Ala-102 is necessary for its cellular translocation to the plasma membrane. 2 disordered regions span residues Arg-174–Leu-231 and Pro-263–Gly-287. Polar residues-rich tracts occupy residues Arg-221–Leu-231 and Ser-277–Gly-287. Phosphoserine; by MARK2 is present on Ser-227. Residue Ser-277 is modified to Phosphoserine. The short motif at Asn-323 to Phe-325 is the NPF 1 element. Residues Lys-347 to Lys-374 are compositionally biased toward basic and acidic residues. Positions Lys-347 to Ser-390 are disordered. 2 consecutive short sequence motifs (NPF) follow at residues Asn-406 to Phe-408 and Asn-440 to Phe-442. The 63-residue stretch at Pro-437 to Pro-499 folds into the FIP-RBD domain. The interval Glu-465–Ser-512 is necessary for interaction with AP2A1, RAB11A, subcellular location, endocytosis activity and homooligomerization.

Homooligomerizes in a Rab11-independent manner. Forms a heterooligomeric complex with RAB11FIP4. Interacts with AP2A1, MYO5B, RAB25 and REPS1. Interacts with RAB11A and RAB11B (activated GTP-bound form). Interacts with NPC1L1. Interacts (via NPF motifs) with EHD1 and EHD3. Interacts with TICAM2; this interaction directs RAB11FIP2 to the phagosome. Interacts with RAB14 and RAB25 (GTP-bound forms). Post-translationally, phosphorylation at Ser-227 by MARK2 regulates epithelial cell polarity.

The protein localises to the cell membrane. It is found in the recycling endosome membrane. A Rab11 effector binding preferentially phosphatidylinositol 3,4,5-trisphosphate (PtdInsP3) and phosphatidic acid (PA) and acting in the regulation of the transport of vesicles from the endosomal recycling compartment (ERC) to the plasma membrane. Involved in insulin granule exocytosis. Also involved in receptor-mediated endocytosis and membrane trafficking of recycling endosomes, probably originating from clathrin-coated vesicles. Required in a complex with MYO5B and RAB11 for the transport of NPC1L1 to the plasma membrane. Also acts as a regulator of cell polarity. Plays an essential role in phagocytosis through a mechanism involving TICAM2, RAC1 and CDC42 Rho GTPases for controlling actin-dynamics. In Mus musculus (Mouse), this protein is Rab11 family-interacting protein 2 (Rab11fip2).